The primary structure comprises 313 residues: R2-like ligand binding oxidase (313 aa).

E68, E101, and H104 together coordinate Mn(2+). The segment at residues 71–162 is a cross-link (3-(O4'-tyrosyl)-valine (Val-Tyr)); the sequence is VTQDIQPFMS…AAQVRASVTY (92 aa). E101 is a binding site for Fe cation. E167, E202, and H205 together coordinate Fe cation.

Belongs to the ribonucleoside diphosphate reductase small chain family. R2-like ligand binding oxidase subfamily. Homodimer. Fe cation serves as cofactor. It depends on Mn(2+) as a cofactor.

Probable oxidase that might be involved in lipid metabolism. This is R2-like ligand binding oxidase from Mycobacteroides abscessus (strain ATCC 19977 / DSM 44196 / CCUG 20993 / CIP 104536 / JCM 13569 / NCTC 13031 / TMC 1543 / L948) (Mycobacterium abscessus).